Reading from the N-terminus, the 688-residue chain is Glycine--tRNA ligase beta subunit (688 aa).

Belongs to the class-II aminoacyl-tRNA synthetase family. Tetramer of two alpha and two beta subunits.

It is found in the cytoplasm. It carries out the reaction tRNA(Gly) + glycine + ATP = glycyl-tRNA(Gly) + AMP + diphosphate. The polypeptide is Glycine--tRNA ligase beta subunit (Listeria welshimeri serovar 6b (strain ATCC 35897 / DSM 20650 / CCUG 15529 / CIP 8149 / NCTC 11857 / SLCC 5334 / V8)).